The chain runs to 132 residues: Small ribosomal subunit protein uS8 (132 aa).

It belongs to the universal ribosomal protein uS8 family. Part of the 30S ribosomal subunit. Contacts proteins S5 and S12.

One of the primary rRNA binding proteins, it binds directly to 16S rRNA central domain where it helps coordinate assembly of the platform of the 30S subunit. The protein is Small ribosomal subunit protein uS8 of Caulobacter vibrioides (strain ATCC 19089 / CIP 103742 / CB 15) (Caulobacter crescentus).